We begin with the raw amino-acid sequence, 417 residues long: Magnesium-protoporphyrin IX monomethyl ester [oxidative] cyclase, chloroplastic (417 aa).

The transit peptide at Met1 to Arg45 directs the protein to the chloroplast.

The protein belongs to the AcsF family. Fe cation is required as a cofactor.

It is found in the plastid. Its subcellular location is the chloroplast membrane. The enzyme catalyses Mg-protoporphyrin IX 13-monomethyl ester + 3 NADPH + 3 O2 + 2 H(+) = 3,8-divinyl protochlorophyllide a + 3 NADP(+) + 5 H2O. It functions in the pathway porphyrin-containing compound metabolism; chlorophyll biosynthesis. Catalyzes the formation of the isocyclic ring in chlorophyll biosynthesis. Mediates the cyclase reaction, which results in the formation of divinylprotochlorophyllide (Pchlide) characteristic of all chlorophylls from magnesium-protoporphyrin IX 13-monomethyl ester (MgPMME). This Hordeum vulgare (Barley) protein is Magnesium-protoporphyrin IX monomethyl ester [oxidative] cyclase, chloroplastic (CRD1).